We begin with the raw amino-acid sequence, 257 residues long: 3-methyl-2-oxobutanoate hydroxymethyltransferase (257 aa).

Mg(2+)-binding residues include aspartate 42 and aspartate 86. Residues 42 to 43 (DS), aspartate 86, and lysine 116 each bind 3-methyl-2-oxobutanoate. Residue glutamate 118 coordinates Mg(2+). Glutamate 185 acts as the Proton acceptor in catalysis.

This sequence belongs to the PanB family. As to quaternary structure, homodecamer; pentamer of dimers. Mg(2+) is required as a cofactor.

It localises to the cytoplasm. It carries out the reaction 3-methyl-2-oxobutanoate + (6R)-5,10-methylene-5,6,7,8-tetrahydrofolate + H2O = 2-dehydropantoate + (6S)-5,6,7,8-tetrahydrofolate. The protein operates within cofactor biosynthesis; (R)-pantothenate biosynthesis; (R)-pantoate from 3-methyl-2-oxobutanoate: step 1/2. In terms of biological role, catalyzes the reversible reaction in which hydroxymethyl group from 5,10-methylenetetrahydrofolate is transferred onto alpha-ketoisovalerate to form ketopantoate. The protein is 3-methyl-2-oxobutanoate hydroxymethyltransferase of Prochlorococcus marinus (strain MIT 9215).